The primary structure comprises 347 residues: MIETDRLITPAPLSLKEEDLERALRPKHLAEYIGQEKIRGQLQIFIEAARRRREALDHVLLFGPPGLGKTTLAHIVAKEMGVGLRQTSGPVLERPGDLAALLTNLEPNDVLFIDEIHRLSPVVEEILYPALEDYQLDIMIGEGPAARSVKLDLPPFTLVGATTRAGMLTNPLRDRFGIISRLEFYSVEELTQIVMRSAALLGADISPDGATEIARRSRGTPRVVNRLLRRVRDFAEVKAEGRINRQVADAALLMLDVDAIGLDVMDRKLLLTVMEKFGGGPVGVDNLAAAISEERGTIEDVLEPYLIQQGYMKRTPRGRMATSIAYQHFGLALPRNGLSADLWDEKQ.

The large ATPase domain (RuvB-L) stretch occupies residues 4–185 (TDRLITPAPL…FGIISRLEFY (182 aa)). ATP-binding positions include Leu-24, Arg-25, Gly-66, Lys-69, Thr-70, Thr-71, 132 to 134 (EDY), Arg-175, Tyr-185, and Arg-222. Thr-70 provides a ligand contact to Mg(2+). The small ATPAse domain (RuvB-S) stretch occupies residues 186–256 (SVEELTQIVM…VADAALLMLD (71 aa)). Positions 259 to 347 (AIGLDVMDRK…LSADLWDEKQ (89 aa)) are head domain (RuvB-H). Arg-295, Arg-314, and Arg-319 together coordinate DNA.

Belongs to the RuvB family. In terms of assembly, homohexamer. Forms an RuvA(8)-RuvB(12)-Holliday junction (HJ) complex. HJ DNA is sandwiched between 2 RuvA tetramers; dsDNA enters through RuvA and exits via RuvB. An RuvB hexamer assembles on each DNA strand where it exits the tetramer. Each RuvB hexamer is contacted by two RuvA subunits (via domain III) on 2 adjacent RuvB subunits; this complex drives branch migration. In the full resolvosome a probable DNA-RuvA(4)-RuvB(12)-RuvC(2) complex forms which resolves the HJ.

The protein localises to the cytoplasm. It carries out the reaction ATP + H2O = ADP + phosphate + H(+). The RuvA-RuvB-RuvC complex processes Holliday junction (HJ) DNA during genetic recombination and DNA repair, while the RuvA-RuvB complex plays an important role in the rescue of blocked DNA replication forks via replication fork reversal (RFR). RuvA specifically binds to HJ cruciform DNA, conferring on it an open structure. The RuvB hexamer acts as an ATP-dependent pump, pulling dsDNA into and through the RuvAB complex. RuvB forms 2 homohexamers on either side of HJ DNA bound by 1 or 2 RuvA tetramers; 4 subunits per hexamer contact DNA at a time. Coordinated motions by a converter formed by DNA-disengaged RuvB subunits stimulates ATP hydrolysis and nucleotide exchange. Immobilization of the converter enables RuvB to convert the ATP-contained energy into a lever motion, pulling 2 nucleotides of DNA out of the RuvA tetramer per ATP hydrolyzed, thus driving DNA branch migration. The RuvB motors rotate together with the DNA substrate, which together with the progressing nucleotide cycle form the mechanistic basis for DNA recombination by continuous HJ branch migration. Branch migration allows RuvC to scan DNA until it finds its consensus sequence, where it cleaves and resolves cruciform DNA. The protein is Holliday junction branch migration complex subunit RuvB of Nitrosospira multiformis (strain ATCC 25196 / NCIMB 11849 / C 71).